The chain runs to 209 residues: NADH-quinone oxidoreductase subunit C (209 aa).

Belongs to the complex I 30 kDa subunit family. As to quaternary structure, NDH-1 is composed of 14 different subunits. Subunits NuoB, C, D, E, F, and G constitute the peripheral sector of the complex.

The protein resides in the cell inner membrane. It catalyses the reaction a quinone + NADH + 5 H(+)(in) = a quinol + NAD(+) + 4 H(+)(out). Functionally, NDH-1 shuttles electrons from NADH, via FMN and iron-sulfur (Fe-S) centers, to quinones in the respiratory chain. The immediate electron acceptor for the enzyme in this species is believed to be ubiquinone. Couples the redox reaction to proton translocation (for every two electrons transferred, four hydrogen ions are translocated across the cytoplasmic membrane), and thus conserves the redox energy in a proton gradient. This chain is NADH-quinone oxidoreductase subunit C, found in Bordetella petrii (strain ATCC BAA-461 / DSM 12804 / CCUG 43448).